Here is a 453-residue protein sequence, read N- to C-terminus: Allantoinase (453 aa).

H59, H61, K146, H186, H242, and D315 together coordinate Zn(2+). Position 146 is an N6-carboxylysine (K146).

This sequence belongs to the metallo-dependent hydrolases superfamily. Allantoinase family. In terms of assembly, homotetramer. The cofactor is Zn(2+). Post-translationally, carboxylation allows a single lysine to coordinate two zinc ions.

The enzyme catalyses (S)-allantoin + H2O = allantoate + H(+). The protein operates within nitrogen metabolism; (S)-allantoin degradation; allantoate from (S)-allantoin: step 1/1. Its function is as follows. Catalyzes the conversion of allantoin (5-ureidohydantoin) to allantoic acid by hydrolytic cleavage of the five-member hydantoin ring. The polypeptide is Allantoinase (Salmonella agona (strain SL483)).